Reading from the N-terminus, the 160-residue chain is SsrA-binding protein (160 aa).

Belongs to the SmpB family.

The protein resides in the cytoplasm. Its function is as follows. Required for rescue of stalled ribosomes mediated by trans-translation. Binds to transfer-messenger RNA (tmRNA), required for stable association of tmRNA with ribosomes. tmRNA and SmpB together mimic tRNA shape, replacing the anticodon stem-loop with SmpB. tmRNA is encoded by the ssrA gene; the 2 termini fold to resemble tRNA(Ala) and it encodes a 'tag peptide', a short internal open reading frame. During trans-translation Ala-aminoacylated tmRNA acts like a tRNA, entering the A-site of stalled ribosomes, displacing the stalled mRNA. The ribosome then switches to translate the ORF on the tmRNA; the nascent peptide is terminated with the 'tag peptide' encoded by the tmRNA and targeted for degradation. The ribosome is freed to recommence translation, which seems to be the essential function of trans-translation. This Rhodospirillum rubrum (strain ATCC 11170 / ATH 1.1.1 / DSM 467 / LMG 4362 / NCIMB 8255 / S1) protein is SsrA-binding protein.